A 561-amino-acid polypeptide reads, in one-letter code: DNA ligase (561 aa).

ATP is bound at residue E249. K251 functions as the N6-AMP-lysine intermediate in the catalytic mechanism. Residues R256, R271, E301, F340, R417, and K423 each coordinate ATP.

This sequence belongs to the ATP-dependent DNA ligase family. It depends on Mg(2+) as a cofactor.

The enzyme catalyses ATP + (deoxyribonucleotide)n-3'-hydroxyl + 5'-phospho-(deoxyribonucleotide)m = (deoxyribonucleotide)n+m + AMP + diphosphate.. Functionally, DNA ligase that seals nicks in double-stranded DNA during DNA replication, DNA recombination and DNA repair. In Methanothermobacter thermautotrophicus (strain ATCC 29096 / DSM 1053 / JCM 10044 / NBRC 100330 / Delta H) (Methanobacterium thermoautotrophicum), this protein is DNA ligase.